Reading from the N-terminus, the 4069-residue chain is Cardiomyopathy-associated protein 5 (4069 aa).

Disordered stretches follow at residues 1–177 (MASR…SQVL), 341–387 (TVPS…DTPA), 442–525 (GLAA…EDSN), 538–558 (ESPL…VEHK), 597–705 (EYSV…VPSL), 732–793 (PSEE…RFTP), 844–872 (SSPD…APPL), 890–948 (LERY…FSPD), 979–1009 (TSPS…VSIP), 1041–1097 (ADEE…PEIP), 1160–1179 (VKEE…SVPA), 1205–1237 (RKEE…PESE), 1540–1575 (KETE…ELEN), 1594–1742 (PAVE…EEFQ), 1757–1809 (HPAD…ITEP), 1892–1988 (ENWM…VKLA), 2064–2175 (TISS…KKGI), 2187–2259 (FGSS…SGDG), 2385–2412 (PQQP…SIIL), 2425–2463 (SEDR…LENR), 2494–2527 (TQIT…NERP), 2653–2706 (QEGN…VGTQ), and 2750–2862 (SSRD…SDVP). Residues 27–47 (ETEEESEGEEDETAAESEEEP) are compositionally biased toward acidic residues. The span at 48–62 (DSRLSDQDEEGKIKQ) shows a compositional bias: basic and acidic residues. Positions 84 to 119 (TWETNSSRSSTPWASEESQTSGVCSREGSTVNSPPG) are enriched in polar residues. The segment covering 130–153 (KVRKRTHKSKHGSPSLRRKGNRKR) has biased composition (basic residues). Phosphoserine is present on Ser-155. Composition is skewed to polar residues over residues 156 to 177 (FESQ…SQVL) and 341 to 350 (TVPSYSSSGR). Positions 489–499 (LEPSISLSEPL) are enriched in low complexity. Residues 500–510 (MLEEPEKEEIE) show a composition bias toward acidic residues. Residue Ser-631 is modified to Phosphoserine. Over residues 640 to 659 (AYSPAAAPTSESSLSPSTTE) the composition is skewed to low complexity. 3 stretches are compositionally biased toward polar residues: residues 664-673 (NQSPLFSTVT), 692-701 (PDSTSASEYS), and 752-775 (PSLS…TATS). Residues 1049–1063 (TAATPVSEQFSSSQK) are compositionally biased toward polar residues. Residues 1085–1094 (DKSEKAEIKP) are compositionally biased toward basic and acidic residues. Positions 1214 to 1223 (QEATAHVSQD) are enriched in polar residues. Over residues 1621-1630 (EPEKKDKPHQ) the composition is skewed to basic and acidic residues. Residues 1639-1662 (SEFSSDLGRQSGSIGTKQAKSPIT) are compositionally biased toward polar residues. 3 stretches are compositionally biased toward basic and acidic residues: residues 1668 to 1687 (VLEK…ENRE), 1704 to 1714 (LREESQNEEIK), and 1786 to 1795 (ILDKLSEETG). A compositionally biased stretch (polar residues) spans 1796 to 1808 (HPNSSQVLQSITE). Basic and acidic residues predominate over residues 1935 to 1955 (SKDHTCEVRKQVLPHSAEESH). The segment covering 1956 to 1980 (LSSQEAVSALDTSSGNTETLSSKSY) has biased composition (polar residues). The segment covering 2085 to 2124 (NEKEAHRSTPPFPEEKPLEESKMVQSKVIDDADEGKKPSP) has biased composition (basic and acidic residues). Over residues 2145 to 2155 (SPESPEVTQNP) the composition is skewed to polar residues. Composition is skewed to basic and acidic residues over residues 2162-2172 (AKPDLPEEKGK) and 2232-2250 (KPAD…DEPR). Over residues 2387–2399 (QPKSASSNFASKN) the composition is skewed to polar residues. Ser-2404 bears the Phosphoserine mark. Residues 2441–2461 (ISEEETKLRSVSPTEKKDNLE) are compositionally biased toward basic and acidic residues. 3 stretches are compositionally biased toward basic and acidic residues: residues 2661–2681 (KSSR…ESEL), 2750–2769 (SSRD…ESEL), and 2777–2804 (ITKE…ETKS). Residue Ser-2813 is modified to Phosphoserine. Residues 2830-2847 (AVKKKEMPRSELTPERHT) show a composition bias toward basic and acidic residues. Residues 2964-2988 (SIDQEESEQMQDKLEYLEEKASFKT) adopt a coiled-coil conformation. A compositionally biased stretch (basic and acidic residues) spans 3015–3031 (PLKENKQKETHKTKEEI). Disordered stretches follow at residues 3015–3037 (PLKE…DSET), 3119–3156 (EKGH…PGMP), 3204–3231 (KKKE…SDTD), 3386–3421 (SGAT…QDEY), and 3465–3495 (EFAS…SSEV). A required for RYR2 clustering region spans residues 3052–3365 (YFEKYTLIDY…GSHGNEVGNA (314 aa)). Over residues 3128-3138 (PETQSQNSADR) the composition is skewed to polar residues. Residues 3139–3150 (NVSKDTKRDVDS) show a composition bias toward basic and acidic residues. Positions 3213–3227 (EGDSVNSEASFPSRN) are enriched in polar residues. Residue Ser-3228 is modified to Phosphoserine. The segment covering 3477–3489 (EQKELGSERKEED) has biased composition (basic and acidic residues). Positions 3517–3544 (KCPISATDKVFGTHKDHEVSTLDTAISA) are amphipathic helix H1. Residues 3544-3653 (AVKVQLAEFL…REAEELDEAV (110 aa)) are a coiled coil. The B-box coiled-coil; BBC stretch occupies residues 3545–3672 (VKVQLAEFLE…ERLLSAMEST (128 aa)). The amphipathic helix H2 stretch occupies residues 3631–3648 (SMDTAKDTLETIVREAEE). Fibronectin type-III domains lie at 3704 to 3805 (VPQP…TAPS) and 3806 to 3898 (TPVI…TRGT). The segment at 3751–3767 (EVNELVEEYRLTVKESY) is amphipathic helix H3. The 186-residue stretch at 3880–4065 (NAFGTSEQSE…LHLGIEPPDS (186 aa)) folds into the B30.2/SPRY domain.

Interacts with PRKAR2A. Interacts with ACTN2 and DTNBP1/dysbindin. Interacts with DES. Interacts with DMD/dystrophin. Interacts with the calcineurin catalytic subunit PPP3CA. Interacts with TTN. Interacts with CAPN3; this interaction, which results in CMYA5 proteolysis, may protect CAPN3 from autolysis. Interacts with FSD2. Identified in a complex composed of FSD2, CMYA5 and RYR2. In terms of processing, phosphorylated by PKA. As to expression, expressed in skeletal muscle; at a strong level and in heart.

The protein localises to the nucleus. The protein resides in the sarcoplasmic reticulum. It is found in the cytoplasm. Its subcellular location is the perinuclear region. It localises to the myofibril. The protein localises to the sarcomere. The protein resides in the m line. May serve as an anchoring protein that mediates the subcellular compartmentation of protein kinase A (PKA) via binding to PRKAR2A. May function as a repressor of calcineurin-mediated transcriptional activity. May attenuate calcineurin ability to induce slow-fiber gene program in muscle and may negatively modulate skeletal muscle regeneration. Plays a role in the assembly of ryanodine receptor (RYR2) clusters in striated muscle. The protein is Cardiomyopathy-associated protein 5 (CMYA5) of Homo sapiens (Human).